Reading from the N-terminus, the 266-residue chain is Glutamate racemase 1 (266 aa).

Residues 11–12 (DS) and 43–44 (YG) each bind substrate. The active-site Proton donor/acceptor is Cys74. Residue 75–76 (NT) coordinates substrate. Catalysis depends on Cys182, which acts as the Proton donor/acceptor. 183-184 (TH) is a substrate binding site.

Belongs to the aspartate/glutamate racemases family.

It carries out the reaction L-glutamate = D-glutamate. Its pathway is cell wall biogenesis; peptidoglycan biosynthesis. Functionally, provides the (R)-glutamate required for cell wall biosynthesis. In Caldanaerobacter subterraneus subsp. tengcongensis (strain DSM 15242 / JCM 11007 / NBRC 100824 / MB4) (Thermoanaerobacter tengcongensis), this protein is Glutamate racemase 1.